The chain runs to 164 residues: Cyanate hydratase (164 aa).

Catalysis depends on residues Arg104, Glu107, and Ser130.

This sequence belongs to the cyanase family.

The enzyme catalyses cyanate + hydrogencarbonate + 3 H(+) = NH4(+) + 2 CO2. Its function is as follows. Catalyzes the reaction of cyanate with bicarbonate to produce ammonia and carbon dioxide. The sequence is that of Cyanate hydratase from Botryotinia fuckeliana (strain B05.10) (Noble rot fungus).